The primary structure comprises 294 residues: Elongation factor Ts (294 aa).

The involved in Mg(2+) ion dislocation from EF-Tu stretch occupies residues 81–84 (TDFV).

It belongs to the EF-Ts family.

The protein resides in the cytoplasm. In terms of biological role, associates with the EF-Tu.GDP complex and induces the exchange of GDP to GTP. It remains bound to the aminoacyl-tRNA.EF-Tu.GTP complex up to the GTP hydrolysis stage on the ribosome. The chain is Elongation factor Ts from Lawsonia intracellularis (strain PHE/MN1-00).